Here is a 700-residue protein sequence, read N- to C-terminus: Calpain-2 catalytic subunit (700 aa).

Residue Ala2 is modified to N-acetylalanine. A propeptide spans 2–19 (anchors to the small subunit); that stretch reads AGIAAKLAKDREAAEGLG. The Calpain catalytic domain occupies 45–344; it reads LFQDPSFPAL…YSRLEICNLT (300 aa). Ca(2+) contacts are provided by Gly91 and Asp96. The active site involves Cys105. Positions 175, 229, and 230 each coordinate Ca(2+). Catalysis depends on residues His262 and Asn286. Ca(2+)-binding residues include Glu292, Asp299, and Glu323. Residues 345 to 514 are domain III; sequence PDTLTSDSYK…KKADYQVVDD (170 aa). A linker region spans residues 515–529; sequence EIEANIDEIDISEDD. The segment at 530 to 700 is domain IV; the sequence is IDDGFRRLFA…LISWLSFSVL (171 aa). Residues Ala542, Asp545, Glu547, Glu552, Asp585, Asp587, Ser589, Lys591, Glu596, Asp615, Asp617, Ser619, Thr621, Glu626, Asp658, and Asn661 each contribute to the Ca(2+) site. 3 EF-hand domains span residues 572 to 597, 602 to 637, and 652 to 672; these read FSIE…LKEF, TKIQ…AGFK, and DDDL…LETL.

The protein belongs to the peptidase C2 family. In terms of assembly, forms a heterodimer with a small (regulatory) subunit (CAPNS1). Interacts with CPEB3; this leads to cleavage of CPEB3. Ca(2+) serves as cofactor. In terms of tissue distribution, ubiquitous.

Its subcellular location is the cytoplasm. The protein resides in the cell membrane. The enzyme catalyses Broad endopeptidase specificity.. Its activity is regulated as follows. Activated by 200-1000 micromolar concentrations of calcium and inhibited by calpastatin. In terms of biological role, calcium-regulated non-lysosomal thiol-protease which catalyzes limited proteolysis of substrates involved in cytoskeletal remodeling and signal transduction. Proteolytically cleaves MYOC at 'Arg-226'. Proteolytically cleaves CPEB3 following neuronal stimulation which abolishes CPEB3 translational repressor activity, leading to translation of CPEB3 target mRNAs. In Bos taurus (Bovine), this protein is Calpain-2 catalytic subunit (CAPN2).